The sequence spans 164 residues: Protein SprT (164 aa).

Residues 13–156 enclose the SprT-like domain; the sequence is YQQAEAFFKR…LCKRCREILV (144 aa). H69 contacts Zn(2+). The active site involves E70. H73 contributes to the Zn(2+) binding site.

This sequence belongs to the SprT family. It depends on Zn(2+) as a cofactor.

It localises to the cytoplasm. The polypeptide is Protein SprT (Pseudomonas putida (strain ATCC 700007 / DSM 6899 / JCM 31910 / BCRC 17059 / LMG 24140 / F1)).